The primary structure comprises 405 residues: L-rhamnonate dehydratase (405 aa).

Residues His33 and Arg59 each coordinate substrate. Residues Asp226, Glu252, and Glu280 each contribute to the Mg(2+) site. The active-site Proton acceptor is the His329. Substrate is bound at residue Glu349.

Belongs to the mandelate racemase/muconate lactonizing enzyme family. RhamD subfamily. In terms of assembly, homooctamer; tetramer of dimers. Requires Mg(2+) as cofactor.

The catalysed reaction is L-rhamnonate = 2-dehydro-3-deoxy-L-rhamnonate + H2O. Functionally, catalyzes the dehydration of L-rhamnonate to 2-keto-3-deoxy-L-rhamnonate (KDR). This is L-rhamnonate dehydratase from Salmonella typhi.